The sequence spans 429 residues: UDP-N-acetylglucosamine 1-carboxyvinyltransferase (429 aa).

Residue 22–23 (KN) participates in phosphoenolpyruvate binding. Arg-102 contributes to the UDP-N-acetyl-alpha-D-glucosamine binding site. Catalysis depends on Cys-126, which acts as the Proton donor. Cys-126 carries the post-translational modification 2-(S-cysteinyl)pyruvic acid O-phosphothioketal. UDP-N-acetyl-alpha-D-glucosamine-binding positions include 131-135 (RPVDL), Asp-316, and Ile-338.

Belongs to the EPSP synthase family. MurA subfamily.

The protein localises to the cytoplasm. It catalyses the reaction phosphoenolpyruvate + UDP-N-acetyl-alpha-D-glucosamine = UDP-N-acetyl-3-O-(1-carboxyvinyl)-alpha-D-glucosamine + phosphate. The protein operates within cell wall biogenesis; peptidoglycan biosynthesis. Its function is as follows. Cell wall formation. Adds enolpyruvyl to UDP-N-acetylglucosamine. This chain is UDP-N-acetylglucosamine 1-carboxyvinyltransferase, found in Methylobacterium nodulans (strain LMG 21967 / CNCM I-2342 / ORS 2060).